The primary structure comprises 219 residues: Putative NAD(P)H nitroreductase SSP0379 (219 aa).

Belongs to the nitroreductase family. The cofactor is FMN.

The polypeptide is Putative NAD(P)H nitroreductase SSP0379 (Staphylococcus saprophyticus subsp. saprophyticus (strain ATCC 15305 / DSM 20229 / NCIMB 8711 / NCTC 7292 / S-41)).